A 350-amino-acid chain; its full sequence is Purine-rich element-binding protein gamma (350 aa).

Disordered regions lie at residues Met-1–Glu-59 and Gly-136–Ser-172. Gly residues predominate over residues Gly-9 to Gly-27. Residues Ala-47–Glu-59 show a composition bias toward polar residues. A DNA-binding region spans residues Ser-54–Arg-296. The span at His-137–Ser-149 shows a compositional bias: basic and acidic residues. Phosphoserine is present on residues Ser-163, Ser-166, and Ser-342.

It belongs to the PUR DNA-binding protein family. Isoform 1 is expressed in testis. Isoform 2 is expressed in blastocyst and kidney.

The protein resides in the nucleus. This is Purine-rich element-binding protein gamma (Purg) from Mus musculus (Mouse).